Consider the following 511-residue polypeptide: Protoheme IX farnesyltransferase, mitochondrial (511 aa).

A mitochondrion-targeting transit peptide spans 1–23 (MSSSTESLPGTLRRTLTTSRAPA). Disordered regions lie at residues 1-27 (MSSS…ATSS) and 50-136 (HDSA…LAPD). Low complexity-rich tracts occupy residues 52-79 (SASS…SSTT), 104-115 (RKAAAAAAAAAA), and 126-136 (PDAPTADLAPD). A run of 8 helical transmembrane segments spans residues 168-188 (LTVL…VPSF), 197-217 (SLAP…TTLC), 253-273 (AAVL…YFGV), 275-295 (PTVS…YTPL), 303-323 (TWVG…AAAG), 344-364 (LGGW…FMPL), 398-418 (AFIP…SFAV), and 444-464 (ARGL…LALA).

Belongs to the UbiA prenyltransferase family.

The protein localises to the mitochondrion membrane. Functionally, converts protoheme IX and farnesyl diphosphate to heme O. The polypeptide is Protoheme IX farnesyltransferase, mitochondrial (pft-1) (Neurospora crassa (strain ATCC 24698 / 74-OR23-1A / CBS 708.71 / DSM 1257 / FGSC 987)).